The primary structure comprises 327 residues: Carboxylesterase 20 (327 aa).

The short motif at 87–89 (HGG) is the Involved in the stabilization of the negatively charged intermediate by the formation of the oxyanion hole element. Serine 166 functions as the Nucleophile in the catalytic mechanism. Residues aspartate 272 and histidine 302 contribute to the active site.

Belongs to the 'GDXG' lipolytic enzyme family. As to expression, expressed in roots, stems, flowers and siliques.

It carries out the reaction a carboxylic ester + H2O = an alcohol + a carboxylate + H(+). Esterase activity measured in vitro with the synthetic substrate p-nitrophenyl acetate (pNPA) is inhibited by strigolactone. Functionally, carboxylesterase that possesses esterase activity in vitro with the synthetic substrate p-nitrophenyl acetate (pNPA). Binds strigolactones, but is not able to hydrolyze them. May be involved in the regulation of shoot branching. This Arabidopsis thaliana (Mouse-ear cress) protein is Carboxylesterase 20.